Consider the following 474-residue polypeptide: tRNA-2-methylthio-N(6)-dimethylallyladenosine synthase (474 aa).

The region spanning lysine 3–isoleucine 120 is the MTTase N-terminal domain. 6 residues coordinate [4Fe-4S] cluster: cysteine 12, cysteine 49, cysteine 83, cysteine 157, cysteine 161, and cysteine 164. In terms of domain architecture, Radical SAM core spans arginine 143 to arginine 382. Residues valine 381–arginine 444 form the TRAM domain.

The protein belongs to the methylthiotransferase family. MiaB subfamily. As to quaternary structure, monomer. [4Fe-4S] cluster is required as a cofactor.

The protein localises to the cytoplasm. It catalyses the reaction N(6)-dimethylallyladenosine(37) in tRNA + (sulfur carrier)-SH + AH2 + 2 S-adenosyl-L-methionine = 2-methylsulfanyl-N(6)-dimethylallyladenosine(37) in tRNA + (sulfur carrier)-H + 5'-deoxyadenosine + L-methionine + A + S-adenosyl-L-homocysteine + 2 H(+). In terms of biological role, catalyzes the methylthiolation of N6-(dimethylallyl)adenosine (i(6)A), leading to the formation of 2-methylthio-N6-(dimethylallyl)adenosine (ms(2)i(6)A) at position 37 in tRNAs that read codons beginning with uridine. The sequence is that of tRNA-2-methylthio-N(6)-dimethylallyladenosine synthase from Nitrosospira multiformis (strain ATCC 25196 / NCIMB 11849 / C 71).